A 531-amino-acid chain; its full sequence is Beta-hexosaminidase subunit beta (531 aa).

The signal sequence occupies residues 1-21 (MEVLPGLLRLLAALVVAERWA). C67 and C111 are oxidised to a cystine. N-linked (GlcNAc...) asparagine glycans are attached at residues N120, N164, and N301. Cystine bridges form between C283-C334 and C508-C525. The active-site Proton donor is the E329.

The protein belongs to the glycosyl hydrolase 20 family. As to quaternary structure, there are 3 forms of beta-hexosaminidase: hexosaminidase A is a heterodimer composed of one subunit alpha and one subunit beta (chain A and B); hexosaminidase B is a homodimer of two beta subunits (two chains A and B); hexosaminidase S is a homodimer of two alpha subunits. The composition of the dimer (isozyme A versus isozyme S) has a significant effect on the substrate specificity of the alpha subunit active site.

The protein resides in the lysosome. It is found in the cytoplasmic vesicle. It localises to the secretory vesicle. Its subcellular location is the cortical granule. It carries out the reaction Hydrolysis of terminal non-reducing N-acetyl-D-hexosamine residues in N-acetyl-beta-D-hexosaminides.. The catalysed reaction is N-acetyl-beta-D-galactosaminyl-(1-&gt;4)-beta-D-3-sulfogalactosyl-(1-&gt;4)-beta-D-glucosyl-(1&lt;-&gt;1')-ceramide + H2O = a beta-D-3-sulfogalactosyl-(1-&gt;4)-beta-D-glucosyl-(1&lt;-&gt;1')-ceramide + N-acetyl-beta-D-galactosamine. The enzyme catalyses a ganglioside GM2 (d18:1(4E)) + H2O = a ganglioside GM3 (d18:1(4E)) + N-acetyl-beta-D-galactosamine. It catalyses the reaction a ganglioside GM2 + H2O = a ganglioside GM3 + N-acetyl-beta-D-galactosamine. It carries out the reaction beta-D-GalNAc-(1-&gt;4)-alpha-L-IdoA-(1-&gt;3)-beta-D-GalNAc-4-sulfate-(1-&gt;4)-alpha-L-IdoA-(1-&gt;3)-D-GalNAc-4-sulfate + H2O = alpha-L-IdoA-(1-&gt;3)-beta-D-GalNAc-4-sulfate-(1-&gt;4)-alpha-L-IdoA-(1-&gt;3)-D-GalNAc-4-sulfate + N-acetyl-D-galactosamine. The catalysed reaction is N-acetyl-beta-D-6-sulfogalactosaminyl-(1-&gt;4)-alpha-L-iduronyl-(1-&gt;3)-N-acetyl-D-6-sulfogalactosamine + H2O = alpha-L-iduronyl-(1-&gt;3)-N-acetyl-D-6-sulfogalactosamine + N-acetyl-D-6-sulfogalactosamine. With respect to regulation, addition of GM2A stimulates the hydrolysis of sulfated glycosphingolipid SM2 and the ganglioside GM2. Hydrolyzes the non-reducing end N-acetyl-D-hexosamine and/or sulfated N-acetyl-D-hexosamine of glycoconjugates, such as the oligosaccharide moieties from proteins and neutral glycolipids, or from certain mucopolysaccharides. The isozyme B does not hydrolyze each of these substrates, however hydrolyzes efficiently neutral oligosaccharide. Only the isozyme A is responsible for the degradation of GM2 gangliosides in the presence of GM2A. During fertilization is responsible, at least in part, for the zona block to polyspermy. Present in the cortical granules of non-activated oocytes, is exocytosed during the cortical reaction in response to oocyte activation and inactivates the sperm galactosyltransferase-binding site, accounting for the block in sperm binding to the zona pellucida. The polypeptide is Beta-hexosaminidase subunit beta (Sus scrofa (Pig)).